Here is a 1388-residue protein sequence, read N- to C-terminus: Kinesin-like protein KIF15 (1388 aa).

The segment at 1–25 is disordered; it reads MAPGCKTELRSVTNGQSNQPSNEGD. Positions 10-22 are enriched in polar residues; sequence RSVTNGQSNQPSN. A Kinesin motor domain is found at 26-363; sequence AIKVFVRIRP…LNFAQRAKLI (338 aa). ATP is bound at residue 109-116; it reads GQTGSGKT. Residues 368–1388 are a coiled coil; it reads VVNEDTQGNV…FLKEKKRSES (1021 aa). Threonine 399 is subject to Phosphothreonine. Serine 568 bears the Phosphoserine mark. Lysine 1009 bears the N6-acetyllysine mark. Serine 1141 and serine 1169 each carry phosphoserine. The tract at residues 1228-1250 is disordered; that stretch reads QKENSDQNHPDNQQLKNEQEESI.

Belongs to the TRAFAC class myosin-kinesin ATPase superfamily. Kinesin family. KLP2 subfamily. As to quaternary structure, interacts with MKI67 and TPX2. In terms of tissue distribution, expressed in testis, colon, thymus and in breast cancer.

It localises to the cytoplasm. The protein resides in the cytoskeleton. The protein localises to the spindle. Functionally, plus-end directed kinesin-like motor enzyme involved in mitotic spindle assembly. The protein is Kinesin-like protein KIF15 (KIF15) of Homo sapiens (Human).